Consider the following 962-residue polypeptide: Phagocyte signaling-impaired protein (962 aa).

3 TPR repeats span residues 45–78 (LCAR…KPTD), 79–112 (DSTL…NPGN), and 523–560 (QIQL…FTNS). Residues 856–880 (TKVKKKQGDNKTQDTPQPVSEKERS) are disordered.

It belongs to the MDM20/NAA25 family. As to quaternary structure, component of the N-terminal acetyltransferase B (NatB) complex.

Its subcellular location is the lysosome. In terms of biological role, non-catalytic subunit of the NatB complex which catalyzes acetylation of the N-terminal methionine residues of proteins beginning with Met-Asp or Met-Glu. Has 2 roles in the larval immune response: required both for the phagocytic degradation of internalized bacteria and for the induction of Defensin in the fat body. Within the phagocytic blood cells, has a role in detection of infection and activation of the humoral immune response. This is Phagocyte signaling-impaired protein from Drosophila pseudoobscura pseudoobscura (Fruit fly).